The following is a 358-amino-acid chain: DNA polymerase IV (358 aa).

Residues 4 to 185 (IIHIDMDCYF…LSLRKIPGVG (182 aa)) enclose the UmuC domain. Mg(2+) contacts are provided by Asp-8 and Asp-103. Glu-104 is a catalytic residue.

It belongs to the DNA polymerase type-Y family. In terms of assembly, monomer. The cofactor is Mg(2+).

It is found in the cytoplasm. The enzyme catalyses DNA(n) + a 2'-deoxyribonucleoside 5'-triphosphate = DNA(n+1) + diphosphate. Its function is as follows. Poorly processive, error-prone DNA polymerase involved in untargeted mutagenesis. Copies undamaged DNA at stalled replication forks, which arise in vivo from mismatched or misaligned primer ends. These misaligned primers can be extended by PolIV. Exhibits no 3'-5' exonuclease (proofreading) activity. May be involved in translesional synthesis, in conjunction with the beta clamp from PolIII. This chain is DNA polymerase IV, found in Shewanella sp. (strain W3-18-1).